Here is a 151-residue protein sequence, read N- to C-terminus: UPF0208 membrane protein PC1_2779 (151 aa).

Transmembrane regions (helical) follow at residues 46–66 (FGIR…IALG) and 69–89 (LGPA…GLWW).

The protein belongs to the UPF0208 family.

The protein resides in the cell inner membrane. This Pectobacterium carotovorum subsp. carotovorum (strain PC1) protein is UPF0208 membrane protein PC1_2779.